A 462-amino-acid chain; its full sequence is Metal cation symporter ZIP8 (462 aa).

The signal sequence occupies residues 1-19 (MAPGRAVAGLLLLAATGLG). The Extracellular segment spans residues 20 to 132 (RPSEGPELAF…PSFSEVWGYG (113 aa)). Asn40, Asn88, and Asn96 each carry an N-linked (GlcNAc...) asparagine glycan. The helical transmembrane segment at 133–153 (FLSVTIINLASLLGLILTPLI) threads the bilayer. The Cytoplasmic segment spans residues 154 to 160 (KKSYFPK). The helical transmembrane segment at 161 to 181 (ILTYFVGLAIGTLFSNAIFQL) threads the bilayer. At 182 to 191 (IPEAFGFNPK) the chain is on the extracellular side. Residues 192–212 (IDNYVEKAVAVFGGFYMLFFV) traverse the membrane as a helical segment. Over 213-367 (ERTLKMLLKT…LNAGMSTRQA (155 aa)) the chain is Cytoplasmic. The XEXPHE-motif signature appears at 345-350 (EEFPHE). The chain crosses the membrane as a helical span at residues 368 to 388 (LLFNFLSACSCYVGLAFGILV). At 389 to 390 (GN) the chain is on the extracellular side. Residues 391–411 (NFAPNIIFALAGGMFLYISLA) traverse the membrane as a helical segment. Residues 412-431 (DMFPEMNDMLREKVTGRQTD) are Cytoplasmic-facing. A helical transmembrane segment spans residues 432–452 (FTFFMIQNAGMLTGFTAILLI). Topologically, residues 453 to 462 (TLYAGDIELQ) are extracellular.

It belongs to the ZIP transporter (TC 2.A.5) family. Homodimer. Post-translationally, N-glycosylated. N-glycosylation is not required for proper iron and zinc transport.

Its subcellular location is the cell membrane. The protein localises to the lysosome membrane. The protein resides in the apical cell membrane. It is found in the basolateral cell membrane. The enzyme catalyses Zn(2+)(out) + 2 hydrogencarbonate(out) = Zn(2+)(in) + 2 hydrogencarbonate(in). The catalysed reaction is selenite(out) + Zn(2+)(out) + hydrogencarbonate(out) = selenite(in) + Zn(2+)(in) + hydrogencarbonate(in). It carries out the reaction Mn(2+)(out) + 2 hydrogencarbonate(out) = Mn(2+)(in) + 2 hydrogencarbonate(in). It catalyses the reaction Fe(2+)(out) + 2 hydrogencarbonate(out) = Fe(2+)(in) + 2 hydrogencarbonate(in). The enzyme catalyses Cd(2+)(out) + 2 hydrogencarbonate(out) = Cd(2+)(in) + 2 hydrogencarbonate(in). The catalysed reaction is Co(2+)(out) + 2 hydrogencarbonate(out) = Co(2+)(in) + 2 hydrogencarbonate(in). Electroneutral divalent metal cation:bicarbonate symporter of the plasma membrane mediating the cellular uptake of zinc and manganese, two divalent metal cations important for development, tissue homeostasis and immunity. Transports an electroneutral complex composed of a divalent metal cation and two bicarbonate anions or alternatively a bicarbonate and a selenite anion. Thereby, it also contributes to the cellular uptake of selenium, an essential trace metal and micronutrient. Also imports cadmium a non-essential metal which is cytotoxic and carcinogenic. May also transport iron and cobalt through membranes. Through zinc import, indirectly regulates the metal-dependent transcription factor MTF1 and the expression of some metalloproteases involved in cartilage catabolism and also probably heart development. Also indirectly regulates the expression of proteins involved in cell morphology and cytoskeleton organization. Indirectly controls innate immune function and inflammatory response by regulating zinc cellular uptake which in turn modulates the expression of genes specific of these processes. Protects, for instance, cells from injury and death at the onset of inflammation. By regulating zinc influx into monocytes also directly modulates their adhesion to endothelial cells and arteries. Reclaims manganese from the bile at the apical membrane of hepatocytes, thereby regulating the activity of the manganese-dependent enzymes through the systemic levels of the nutrient. Also participates in manganese reabsorption in the proximal tubule of the kidney. By mediating the extracellular uptake of manganese by cells of the blood-brain barrier, may also play a role in the transport of the micronutrient to the brain. With manganese cellular uptake also participates in mitochondrial proper function. Finally, also probably functions intracellularly, translocating zinc from lysosome to cytosol to indirectly enhance the expression of specific genes during TCR-mediated T cell activation. This chain is Metal cation symporter ZIP8, found in Rattus norvegicus (Rat).